The sequence spans 553 residues: Dihydroxy-acid dehydratase (553 aa).

Asp78 provides a ligand contact to Mg(2+). Cys119 is a binding site for [2Fe-2S] cluster. Residues Asp120 and Lys121 each coordinate Mg(2+). Lys121 carries the N6-carboxylysine modification. Cys193 contacts [2Fe-2S] cluster. Glu441 serves as a coordination point for Mg(2+). Ser467 acts as the Proton acceptor in catalysis.

The protein belongs to the IlvD/Edd family. In terms of assembly, homodimer. Requires [2Fe-2S] cluster as cofactor. It depends on Mg(2+) as a cofactor.

It carries out the reaction (2R)-2,3-dihydroxy-3-methylbutanoate = 3-methyl-2-oxobutanoate + H2O. The enzyme catalyses (2R,3R)-2,3-dihydroxy-3-methylpentanoate = (S)-3-methyl-2-oxopentanoate + H2O. It functions in the pathway amino-acid biosynthesis; L-isoleucine biosynthesis; L-isoleucine from 2-oxobutanoate: step 3/4. The protein operates within amino-acid biosynthesis; L-valine biosynthesis; L-valine from pyruvate: step 3/4. Functions in the biosynthesis of branched-chain amino acids. Catalyzes the dehydration of (2R,3R)-2,3-dihydroxy-3-methylpentanoate (2,3-dihydroxy-3-methylvalerate) into 2-oxo-3-methylpentanoate (2-oxo-3-methylvalerate) and of (2R)-2,3-dihydroxy-3-methylbutanoate (2,3-dihydroxyisovalerate) into 2-oxo-3-methylbutanoate (2-oxoisovalerate), the penultimate precursor to L-isoleucine and L-valine, respectively. The sequence is that of Dihydroxy-acid dehydratase from Trichlorobacter lovleyi (strain ATCC BAA-1151 / DSM 17278 / SZ) (Geobacter lovleyi).